The chain runs to 147 residues: Small ribosomal subunit protein eS19 (147 aa).

This sequence belongs to the eukaryotic ribosomal protein eS19 family. As to quaternary structure, part of the 30S ribosomal subunit.

May be involved in maturation of the 30S ribosomal subunit. The chain is Small ribosomal subunit protein eS19 from Archaeoglobus fulgidus (strain ATCC 49558 / DSM 4304 / JCM 9628 / NBRC 100126 / VC-16).